The primary structure comprises 502 residues: uncharacterized protein (502 aa).

3 stretches are compositionally biased toward low complexity: residues 1-10 (MQSTTNNNTN), 28-47 (SNRS…NNLS), and 155-171 (NTED…SVNS). Disordered stretches follow at residues 1–57 (MQST…VISY), 155–181 (NTED…LSAR), 212–362 (SLGN…TDKF), and 438–487 (TIDQ…TSNL). Residues 212–230 (SLGNSERNSPDRPSTQGDS) are compositionally biased toward polar residues. 2 stretches are compositionally biased toward low complexity: residues 242–290 (RNAS…SSRN) and 309–327 (SNKN…TSIK). Over residues 339 to 348 (QTNKSKNQRG) the composition is skewed to polar residues. Over residues 446–460 (TSDKNNSTKSNTKYN) the composition is skewed to low complexity. The span at 470–487 (SYGTSKRSHNRSSNTSNL) shows a compositional bias: polar residues.

It localises to the virion. This is an uncharacterized protein from Acanthamoeba polyphaga (Amoeba).